Reading from the N-terminus, the 113-residue chain is Putative pterin-4-alpha-carbinolamine dehydratase (113 aa).

Belongs to the pterin-4-alpha-carbinolamine dehydratase family.

The enzyme catalyses (4aS,6R)-4a-hydroxy-L-erythro-5,6,7,8-tetrahydrobiopterin = (6R)-L-erythro-6,7-dihydrobiopterin + H2O. The polypeptide is Putative pterin-4-alpha-carbinolamine dehydratase (Nitrosococcus oceani (strain ATCC 19707 / BCRC 17464 / JCM 30415 / NCIMB 11848 / C-107)).